A 543-amino-acid chain; its full sequence is Sodium-dependent lysophosphatidylcholine symporter 1 (543 aa).

Positions methionine 1–glycine 14 are enriched in low complexity. Residues methionine 1 to proline 34 are disordered. Topologically, residues methionine 1 to glutamine 40 are cytoplasmic. The chain crosses the membrane as a helical span at residues leucine 41–tyrosine 70. Over leucine 71–serine 94 the chain is Extracellular. A helical transmembrane segment spans residues alanine 95 to leucine 115. Residues cysteine 116–arginine 127 are Cytoplasmic-facing. The chain crosses the membrane as a helical span at residues leucine 128–tryptophan 147. Over phenylalanine 148–threonine 157 the chain is Extracellular. The chain crosses the membrane as a helical span at residues tyrosine 158–threonine 182. Topologically, residues methionine 183–glutamine 189 are cytoplasmic. The helical transmembrane segment at threonine 190–alanine 221 threads the bilayer. The Extracellular segment spans residues aspartate 222–histidine 241. Cysteines 225 and 473 form a disulfide. N-linked (GlcNAc...) asparagine glycosylation is found at asparagine 230 and asparagine 240. Residues threonine 242 to leucine 275 traverse the membrane as a helical segment. Topologically, residues glycine 276–proline 306 are cytoplasmic. Residues tyrosine 307–threonine 333 form a helical membrane-spanning segment. At tyrosine 334–asparagine 344 the chain is on the extracellular side. Residues leucine 345–phenylalanine 363 form a helical membrane-spanning segment. At leucine 364 to phenylalanine 367 the chain is on the cytoplasmic side. A helical transmembrane segment spans residues glycine 368 to leucine 389. Residues methionine 390–serine 392 are Extracellular-facing. A helical membrane pass occupies residues asparagine 393 to lysine 429. Topologically, residues glutamine 430 to isoleucine 439 are cytoplasmic. Residues phenylalanine 440–alanine 466 traverse the membrane as a helical segment. The Extracellular portion of the chain corresponds to glycine 467–arginine 478. Residues valine 479–phenylalanine 502 traverse the membrane as a helical segment. The Cytoplasmic portion of the chain corresponds to lysine 503–leucine 543.

It belongs to the major facilitator superfamily. As to quaternary structure, interacts with ERVFRD-1/syncytin-2. In terms of tissue distribution, in placenta, associated with trophoblast cells.

The protein localises to the cell membrane. Its subcellular location is the endoplasmic reticulum membrane. It carries out the reaction a 1-acyl-sn-glycero-3-phosphocholine(in) + Na(+)(in) = a 1-acyl-sn-glycero-3-phosphocholine(out) + Na(+)(out). It catalyses the reaction 1-(4Z,7Z,10Z,13Z,16Z,19Z-docosahexaenoyl)-sn-glycero-3-phosphocholine(in) + Na(+)(in) = 1-(4Z,7Z,10Z,13Z,16Z,19Z-docosahexaenoyl)-sn-glycero-3-phosphocholine(out) + Na(+)(out). The catalysed reaction is 1-(9Z-octadecenoyl)-sn-glycero-3-phosphocholine(in) + Na(+)(in) = 1-(9Z-octadecenoyl)-sn-glycero-3-phosphocholine(out) + Na(+)(out). The enzyme catalyses 1-hexadecanoyl-sn-glycero-3-phosphocholine(in) + Na(+)(in) = 1-hexadecanoyl-sn-glycero-3-phosphocholine(out) + Na(+)(out). It carries out the reaction a 1-acyl-sn-glycero-3-phosphoethanolamine(in) + Na(+)(in) = a 1-acyl-sn-glycero-3-phosphoethanolamine(out) + Na(+)(out). Its function is as follows. Sodium-dependent lysophosphatidylcholine (LPC) symporter, which plays an essential role for blood-brain barrier formation and function. Specifically expressed in endothelium of the blood-brain barrier of micro-vessels and transports LPC into the brain. Transport of LPC is essential because it constitutes the major mechanism by which docosahexaenoic acid (DHA), an omega-3 fatty acid that is essential for normal brain growth and cognitive function, enters the brain. Transports LPC carrying long-chain fatty acids such LPC oleate and LPC palmitate with a minimum acyl chain length of 14 carbons. Does not transport docosahexaenoic acid in unesterified fatty acid. Specifically required for blood-brain barrier formation and function, probably by mediating lipid transport. Not required for central nervous system vascular morphogenesis. Acts as a transporter for tunicamycin, an inhibitor of asparagine-linked glycosylation. In placenta, acts as a receptor for ERVFRD-1/syncytin-2 and is required for trophoblast fusion. This chain is Sodium-dependent lysophosphatidylcholine symporter 1, found in Homo sapiens (Human).